A 124-amino-acid polypeptide reads, in one-letter code: Small ribosomal subunit protein uS12 (124 aa).

D89 bears the 3-methylthioaspartic acid mark. A disordered region spans residues 104–124; it reads TAGVKDRRQSRSKYGAKAPKE.

Belongs to the universal ribosomal protein uS12 family. Part of the 30S ribosomal subunit. Contacts proteins S8 and S17. May interact with IF1 in the 30S initiation complex.

In terms of biological role, with S4 and S5 plays an important role in translational accuracy. Interacts with and stabilizes bases of the 16S rRNA that are involved in tRNA selection in the A site and with the mRNA backbone. Located at the interface of the 30S and 50S subunits, it traverses the body of the 30S subunit contacting proteins on the other side and probably holding the rRNA structure together. The combined cluster of proteins S8, S12 and S17 appears to hold together the shoulder and platform of the 30S subunit. The polypeptide is Small ribosomal subunit protein uS12 (Synechococcus sp. (strain CC9605)).